A 907-amino-acid polypeptide reads, in one-letter code: MFSKILTKVIGSRNDRTLRKLRKIVDQINKLEPQFESLQDEELKAKTIEFRSRLEQGESLDDLLPEAFATVREASKRLYGMRHFDVQMIGGMVLNDSQIAEMRTGEGKTLTATLPCYLNALTGKGVHVVTVNDYLAKRDAETNRELFEFLGMTVGINVPNMPPQEKKLAYQSDILYGTNNEFGFDYLRDNMAFRAEDRVQRERYFAVIDEVDSILIDEARTPLIISGPADDSSELYTRINILIPQLVKQDEEDSEDYRGEGHYTLDEKGKQTHLTENGQEFVEQLLKDEGLMEEEDTLYSPANISLLHHINAALRAHVLFEKDVDYIVKDDEVIIVDEHTGRTMPGRRWSEGLHQAVEAKEGVKIQNENQTLASITFQNFFRLYDKLSGMTGTADTEAFEFQSIYGLDTVVIPTNRPMTRNDMGDLVYMTEAEKFAAIIEDIKACSERGQPVLVGTVSIEKSELLSNALKTAKIKHNVLNAKFHEQEADIVANAGTSSAVTIATNMAGRGTDIVLGGNWQAEVAKLDNPSAEQVQTIKAAWKEAHDTVLTAGGLHIIGTERHESRRIDNQLRGRAGRQGDAGSSRFYLSMEDALMRIFASDRVSNMMKKLGMEEGEAIEHPWVTKAIENAQRKVEGRNFDIRKQLLEYDDVANDQRKVVYELRDELMNVDDISEMINHNRQDVLEGLFGQYIPPQSLEEMWDVEGLTTRLRTDFDLDLPIQEWLDSDNKLHEDNLREKIIESAFQVYKEKEESVGESVLRNFEKAVMLQTLDGLWKEHLAAMDHLRQGIHLRGYAQKNPKQEYKRESFELFEGLLDTLKLDVVSILSKVRVQQQEDVERMEEQRRKNAEEVARLQKLQHQNAENQLDDGHSSDQNHSPMVRDERKVGRNEVCPCGSGKKYKQCHGKI.

ATP-binding positions include Gln87, 105–109 (GEGKT), and Asp512. Residues 862-885 (AENQLDDGHSSDQNHSPMVRDERK) are disordered. The span at 867 to 885 (DDGHSSDQNHSPMVRDERK) shows a compositional bias: basic and acidic residues. Positions 892, 894, 903, and 904 each coordinate Zn(2+).

This sequence belongs to the SecA family. In terms of assembly, monomer and homodimer. Part of the essential Sec protein translocation apparatus which comprises SecA, SecYEG and auxiliary proteins SecDF-YajC and YidC. The cofactor is Zn(2+).

It is found in the cell inner membrane. The protein localises to the cytoplasm. The catalysed reaction is ATP + H2O + cellular proteinSide 1 = ADP + phosphate + cellular proteinSide 2.. Part of the Sec protein translocase complex. Interacts with the SecYEG preprotein conducting channel. Has a central role in coupling the hydrolysis of ATP to the transfer of proteins into and across the cell membrane, serving both as a receptor for the preprotein-SecB complex and as an ATP-driven molecular motor driving the stepwise translocation of polypeptide chains across the membrane. In Aliivibrio salmonicida (strain LFI1238) (Vibrio salmonicida (strain LFI1238)), this protein is Protein translocase subunit SecA.